Consider the following 430-residue polypeptide: Signal recognition particle protein (430 aa).

GTP contacts are provided by residues 105–112 (GLQGSGKT), 187–191 (DTAGR), and 245–248 (TKLD).

It belongs to the GTP-binding SRP family. SRP54 subfamily. Part of the signal recognition particle protein translocation system, which is composed of SRP and FtsY.

It is found in the cytoplasm. It catalyses the reaction GTP + H2O = GDP + phosphate + H(+). Its function is as follows. Involved in targeting and insertion of nascent membrane proteins into the cytoplasmic membrane. Binds to the hydrophobic signal sequence of the ribosome-nascent chain (RNC) as it emerges from the ribosomes. The SRP-RNC complex is then targeted to the cytoplasmic membrane where it interacts with the SRP receptor FtsY. The chain is Signal recognition particle protein from Thermus aquaticus.